We begin with the raw amino-acid sequence, 137 residues long: Large ribosomal subunit protein uL16c (137 aa).

The protein belongs to the universal ribosomal protein uL16 family. As to quaternary structure, part of the 50S ribosomal subunit.

Its subcellular location is the plastid. The protein localises to the chloroplast. This Thalassiosira pseudonana (Marine diatom) protein is Large ribosomal subunit protein uL16c.